Reading from the N-terminus, the 256-residue chain is 5'-nucleotidase YutF (256 aa).

It belongs to the HAD-like hydrolase superfamily. NagD family. In terms of assembly, homodimer. Requires Mg(2+) as cofactor.

It localises to the cytoplasm. The catalysed reaction is a ribonucleoside 5'-phosphate + H2O = a ribonucleoside + phosphate. It catalyses the reaction XMP + H2O = xanthosine + phosphate. Functionally, catalyzes the hydrolysis of various purine and pyrimidine 5'-nucleotides, showing preference for 5'-nucleoside monophosphates and exhibiting the highest catalytic activity toward 5'-XMP. Also shows a relatively high phosphohydrolase activity toward the nucleotide precursors ribose-5-phosphate (R5P) and 5-phosphoribosyl-1-pyrophosphate (PRPP), and toward the non-natural substrate p-nitrophenyl phosphate (pNPP). The protein is 5'-nucleotidase YutF (yutF) of Bacillus subtilis (strain 168).